Here is a 322-residue protein sequence, read N- to C-terminus: Quinolinate synthase (322 aa).

Positions 37 and 54 each coordinate iminosuccinate. Position 99 (C99) interacts with [4Fe-4S] cluster. Iminosuccinate is bound by residues Y125 to N127 and S142. Residue C185 participates in [4Fe-4S] cluster binding. Residues H211–E213 and T228 each bind iminosuccinate. Residue C278 participates in [4Fe-4S] cluster binding.

Belongs to the quinolinate synthase family. Type 2 subfamily. Requires [4Fe-4S] cluster as cofactor.

The protein resides in the cytoplasm. It catalyses the reaction iminosuccinate + dihydroxyacetone phosphate = quinolinate + phosphate + 2 H2O + H(+). Its pathway is cofactor biosynthesis; NAD(+) biosynthesis; quinolinate from iminoaspartate: step 1/1. In terms of biological role, catalyzes the condensation of iminoaspartate with dihydroxyacetone phosphate to form quinolinate. This chain is Quinolinate synthase, found in Chlorobaculum tepidum (strain ATCC 49652 / DSM 12025 / NBRC 103806 / TLS) (Chlorobium tepidum).